The following is a 148-amino-acid chain: uncharacterized protein (148 aa).

Residues 1 to 21 (MLQNYAIVLGMAVAVAIWYFF) traverse the membrane as a helical segment. Positions 27–61 (APPGPNPPKPDPPKPDPPKMHMPKKKPHWMDPHLT) are disordered.

Its subcellular location is the host membrane. This is an uncharacterized protein from Frog virus 3 (isolate Goorha) (FV-3).